The chain runs to 228 residues: Uracil-DNA glycosylase (228 aa).

The active-site Proton acceptor is Asp64.

This sequence belongs to the uracil-DNA glycosylase (UDG) superfamily. UNG family.

The protein localises to the cytoplasm. It catalyses the reaction Hydrolyzes single-stranded DNA or mismatched double-stranded DNA and polynucleotides, releasing free uracil.. Functionally, excises uracil residues from the DNA which can arise as a result of misincorporation of dUMP residues by DNA polymerase or due to deamination of cytosine. This chain is Uracil-DNA glycosylase, found in Yersinia pseudotuberculosis serotype O:1b (strain IP 31758).